We begin with the raw amino-acid sequence, 501 residues long: Cytochrome P450 3A31 (501 aa).

Cys-440 is a binding site for heme.

This sequence belongs to the cytochrome P450 family. Requires heme as cofactor. In terms of tissue distribution, expressed constitutively in liver.

Its subcellular location is the endoplasmic reticulum membrane. It localises to the microsome membrane. It catalyses the reaction an organic molecule + reduced [NADPH--hemoprotein reductase] + O2 = an alcohol + oxidized [NADPH--hemoprotein reductase] + H2O + H(+). Cytochromes P450 are a group of heme-thiolate monooxygenases. In liver microsomes, this enzyme is involved in an NADPH-dependent electron transport pathway. It oxidizes a variety of structurally unrelated compounds, including steroids, fatty acids, and xenobiotics. The polypeptide is Cytochrome P450 3A31 (CYP3A31) (Mesocricetus auratus (Golden hamster)).